We begin with the raw amino-acid sequence, 132 residues long: Glycine cleavage system H protein (132 aa).

Positions 24–106 (IATIGLSAHA…YEEGWFIKVR (83 aa)) constitute a Lipoyl-binding domain. Lysine 65 carries the post-translational modification N6-lipoyllysine.

This sequence belongs to the GcvH family. In terms of assembly, the glycine cleavage system is composed of four proteins: P, T, L and H. Requires (R)-lipoate as cofactor.

Its function is as follows. The glycine cleavage system catalyzes the degradation of glycine. The H protein shuttles the methylamine group of glycine from the P protein to the T protein. This Picosynechococcus sp. (strain ATCC 27264 / PCC 7002 / PR-6) (Agmenellum quadruplicatum) protein is Glycine cleavage system H protein.